Consider the following 827-residue polypeptide: Cadherin-17 (827 aa).

Residues 1–21 (MVSAQLHFLCLLTLYLTGAYG) form the signal peptide. The Extracellular segment spans residues 22–786 (QEGKFSGPLK…NQVGIPTVGM (765 aa)). Cadherin domains are found at residues 29–127 (PLKP…TFLQ), 128–243 (TKYE…APEP), 244–339 (VEIR…PPTC), 340–448 (LSQV…IPIF), 449–565 (ERSD…VPVF), 566–666 (PQQI…PPRL), and 667–776 (AKDY…RPAG). Residues Asn-148, Asn-183, Asn-249, Asn-418, Asn-545, Asn-573, and Asn-721 are each glycosylated (N-linked (GlcNAc...) asparagine). Residues 787–807 (AVGILLTTFLVIGIILAVVFI) traverse the membrane as a helical segment. Topologically, residues 808-827 (RMRKDKVEDPQSPENKPLRS) are cytoplasmic.

In terms of tissue distribution, liver and intestine.

The protein resides in the cell membrane. Its function is as follows. Cadherins are calcium-dependent cell adhesion proteins. They preferentially interact with themselves in a homophilic manner in connecting cells; cadherins may thus contribute to the sorting of heterogeneous cell types. LI-cadherin may have a role in the morphological organization of liver and intestine. The protein is Cadherin-17 (Cdh17) of Rattus norvegicus (Rat).